A 500-amino-acid polypeptide reads, in one-letter code: Glycerol kinase (500 aa).

Threonine 15 is an ADP binding site. 3 residues coordinate ATP: threonine 15, threonine 16, and serine 17. Threonine 15 provides a ligand contact to sn-glycerol 3-phosphate. Arginine 19 contributes to the ADP binding site. 4 residues coordinate sn-glycerol 3-phosphate: arginine 85, glutamate 86, tyrosine 137, and aspartate 245. Glycerol contacts are provided by arginine 85, glutamate 86, tyrosine 137, aspartate 245, and glutamine 246. ADP-binding residues include threonine 267 and glycine 310. ATP contacts are provided by threonine 267, glycine 310, glutamine 314, and glycine 411. ADP contacts are provided by glycine 411 and asparagine 415.

The protein belongs to the FGGY kinase family.

It carries out the reaction glycerol + ATP = sn-glycerol 3-phosphate + ADP + H(+). It functions in the pathway polyol metabolism; glycerol degradation via glycerol kinase pathway; sn-glycerol 3-phosphate from glycerol: step 1/1. Inhibited by fructose 1,6-bisphosphate (FBP). Key enzyme in the regulation of glycerol uptake and metabolism. Catalyzes the phosphorylation of glycerol to yield sn-glycerol 3-phosphate. The polypeptide is Glycerol kinase (Aeromonas hydrophila subsp. hydrophila (strain ATCC 7966 / DSM 30187 / BCRC 13018 / CCUG 14551 / JCM 1027 / KCTC 2358 / NCIMB 9240 / NCTC 8049)).